Reading from the N-terminus, the 874-residue chain is Bifunctional uridylyltransferase/uridylyl-removing enzyme (874 aa).

The tract at residues 1–336 (MIDTSTITNP…DNGKTVETIQ (336 aa)) is uridylyltransferase. The segment at 337–695 (LSDDFQIRGH…LSKKATRGGT (359 aa)) is uridylyl-removing. An HD domain is found at 455–577 (VDEHSVRLIK…VRDEERLDYL (123 aa)). 2 ACT domains span residues 696 to 779 (EVFV…RAPR) and 802 to 874 (TMEL…TPQD).

The protein belongs to the GlnD family. Mg(2+) is required as a cofactor.

It carries out the reaction [protein-PII]-L-tyrosine + UTP = [protein-PII]-uridylyl-L-tyrosine + diphosphate. The catalysed reaction is [protein-PII]-uridylyl-L-tyrosine + H2O = [protein-PII]-L-tyrosine + UMP + H(+). With respect to regulation, uridylyltransferase (UTase) activity is inhibited by glutamine, while glutamine activates uridylyl-removing (UR) activity. Its function is as follows. Modifies, by uridylylation and deuridylylation, the PII regulatory proteins (GlnB and homologs), in response to the nitrogen status of the cell that GlnD senses through the glutamine level. Under low glutamine levels, catalyzes the conversion of the PII proteins and UTP to PII-UMP and PPi, while under higher glutamine levels, GlnD hydrolyzes PII-UMP to PII and UMP (deuridylylation). Thus, controls uridylylation state and activity of the PII proteins, and plays an important role in the regulation of nitrogen assimilation and metabolism. The sequence is that of Bifunctional uridylyltransferase/uridylyl-removing enzyme from Photobacterium profundum (strain SS9).